An 85-amino-acid chain; its full sequence is Elongation factor 1-beta (85 aa).

The protein belongs to the EF-1-beta/EF-1-delta family.

In terms of biological role, promotes the exchange of GDP for GTP in EF-1-alpha/GDP, thus allowing the regeneration of EF-1-alpha/GTP that could then be used to form the ternary complex EF-1-alpha/GTP/AAtRNA. The polypeptide is Elongation factor 1-beta (Methanosphaerula palustris (strain ATCC BAA-1556 / DSM 19958 / E1-9c)).